The sequence spans 360 residues: Chorismate synthase (360 aa).

Arg46 contributes to the NADP(+) binding site. Residues 122–124 (RAS), Gly282, 297–301 (KPTPS), and Arg324 contribute to the FMN site.

This sequence belongs to the chorismate synthase family. FMNH2 is required as a cofactor.

It carries out the reaction 5-O-(1-carboxyvinyl)-3-phosphoshikimate = chorismate + phosphate. Its pathway is metabolic intermediate biosynthesis; chorismate biosynthesis; chorismate from D-erythrose 4-phosphate and phosphoenolpyruvate: step 7/7. In terms of biological role, catalyzes the anti-1,4-elimination of the C-3 phosphate and the C-6 proR hydrogen from 5-enolpyruvylshikimate-3-phosphate (EPSP) to yield chorismate, which is the branch point compound that serves as the starting substrate for the three terminal pathways of aromatic amino acid biosynthesis. This reaction introduces a second double bond into the aromatic ring system. This chain is Chorismate synthase, found in Archaeoglobus fulgidus (strain ATCC 49558 / DSM 4304 / JCM 9628 / NBRC 100126 / VC-16).